The chain runs to 361 residues: Large-conductance mechanosensitive channel MscMJLR (361 aa).

Transmembrane regions (helical) follow at residues 20 to 40 (ILSL…NALI), 65 to 85 (LPVA…FLYL), 89 to 109 (LKTA…VVFF), 137 to 157 (IVVL…LLLI), and 177 to 197 (LAVA…LIIL).

Belongs to the MscS (TC 1.A.23) family.

The protein resides in the cell membrane. Functionally, large-conductance mechanosensitive channel that opens in response to stretch forces in the membrane lipid bilayer. Selective for cations. Rectifies with voltage. This is Large-conductance mechanosensitive channel MscMJLR from Methanocaldococcus jannaschii (strain ATCC 43067 / DSM 2661 / JAL-1 / JCM 10045 / NBRC 100440) (Methanococcus jannaschii).